A 303-amino-acid polypeptide reads, in one-letter code: MSDIDQWIETLKNGENLKETDVKILCNKAKDILNNEDNVIRVEAPVTICGDIHGQFQDLMELFKVGGDVPETNYLFLGDFVDRGYNSVETFLLLLALKVRYPDQITLIRGNHESRQITQVYGFYDECLRKYSTLNVWKYCTEVFDYLALAAVVNDSIFCVHGGLSPYIKTIDEIRIINRKQEVPHEGVMCDLMWSDPDEIEGWSQSARGAGFVFGADVVKEFNRRNGISLICRAHQLAMEGFKLMFDNSLVTVWSAPNYCYRCGNVASILELDENLKKYYKLFEAAPTDRASNSKKTIADYFL.

The Mn(2+) site is built by aspartate 51, histidine 53, aspartate 79, and asparagine 111. Residue histidine 112 is the Proton donor of the active site. Mn(2+) contacts are provided by histidine 161 and histidine 235.

It belongs to the PPP phosphatase family. PP-4 (PP-X) subfamily. It depends on Mn(2+) as a cofactor.

The enzyme catalyses O-phospho-L-seryl-[protein] + H2O = L-seryl-[protein] + phosphate. It catalyses the reaction O-phospho-L-threonyl-[protein] + H2O = L-threonyl-[protein] + phosphate. The polypeptide is Serine/threonine-protein phosphatase PP-X homolog 2 (Ppx2) (Paramecium tetraurelia).